Reading from the N-terminus, the 476-residue chain is Bifunctional protein HldE (476 aa).

The segment at 1-319 (MKISLPAFEK…EALSLSHGES (319 aa)) is ribokinase. ATP is bound at residue 195–198 (NMSE). Residue D264 is part of the active site. The segment at 345 to 476 (MTNGCFDILH…AIIQNIMANQ (132 aa)) is cytidylyltransferase.

The protein in the N-terminal section; belongs to the carbohydrate kinase PfkB family. This sequence in the C-terminal section; belongs to the cytidylyltransferase family. Homodimer.

It catalyses the reaction D-glycero-beta-D-manno-heptose 7-phosphate + ATP = D-glycero-beta-D-manno-heptose 1,7-bisphosphate + ADP + H(+). The enzyme catalyses D-glycero-beta-D-manno-heptose 1-phosphate + ATP + H(+) = ADP-D-glycero-beta-D-manno-heptose + diphosphate. It functions in the pathway nucleotide-sugar biosynthesis; ADP-L-glycero-beta-D-manno-heptose biosynthesis; ADP-L-glycero-beta-D-manno-heptose from D-glycero-beta-D-manno-heptose 7-phosphate: step 1/4. The protein operates within nucleotide-sugar biosynthesis; ADP-L-glycero-beta-D-manno-heptose biosynthesis; ADP-L-glycero-beta-D-manno-heptose from D-glycero-beta-D-manno-heptose 7-phosphate: step 3/4. In terms of biological role, catalyzes the phosphorylation of D-glycero-D-manno-heptose 7-phosphate at the C-1 position to selectively form D-glycero-beta-D-manno-heptose-1,7-bisphosphate. Its function is as follows. Catalyzes the ADP transfer from ATP to D-glycero-beta-D-manno-heptose 1-phosphate, yielding ADP-D-glycero-beta-D-manno-heptose. The protein is Bifunctional protein HldE of Shewanella pealeana (strain ATCC 700345 / ANG-SQ1).